The primary structure comprises 297 residues: Glycosylphosphatidylinositol anchor biosynthesis protein 11 (297 aa).

The segment covering 1-18 (MTSASPSPLRAANAASSA) has biased composition (low complexity). Residues 1-26 (MTSASPSPLRAANAASSAPVPPPAMK) form a disordered region. 2 helical membrane-spanning segments follow: residues 44–64 (SFVH…ALVA) and 76–96 (FLAL…GSVL). The interval 97–140 (PSPPASPVSDGDEKEKEKEKEKEKEKEKRKLPLRAGKLPRKKNQ) is disordered. The segment covering 107–126 (GDEKEKEKEKEKEKEKEKRK) has biased composition (basic and acidic residues). Basic residues predominate over residues 127–140 (LPLRAGKLPRKKNQ). A glycan (N-linked (GlcNAc...) asparagine) is linked at asparagine 139. 4 helical membrane-spanning segments follow: residues 157 to 177 (LILT…LFGA), 187 to 207 (VLCA…VHGV), 225 to 245 (VWGG…PIPL), and 253 to 273 (AFPI…SVVC).

It belongs to the PIGF family.

The protein resides in the endoplasmic reticulum membrane. The protein operates within glycolipid biosynthesis; glycosylphosphatidylinositol-anchor biosynthesis. Functionally, acts in the GPI biosynthetic pathway between GlcNAc-PI synthesis and GPI transfer to protein. The protein is Glycosylphosphatidylinositol anchor biosynthesis protein 11 (gpi11) of Aspergillus fumigatus (strain ATCC MYA-4609 / CBS 101355 / FGSC A1100 / Af293) (Neosartorya fumigata).